The primary structure comprises 642 residues: Threonine--tRNA ligase (642 aa).

The TGS domain maps to 1–61 (MPVITLPDGS…ESDAQLAIIT (61 aa)). Residues 243-534 (DHRKIGKQLD…LTEEYAGFFP (292 aa)) form a catalytic region. Zn(2+) contacts are provided by Cys334, His385, and His511.

This sequence belongs to the class-II aminoacyl-tRNA synthetase family. Homodimer. It depends on Zn(2+) as a cofactor.

The protein localises to the cytoplasm. It carries out the reaction tRNA(Thr) + L-threonine + ATP = L-threonyl-tRNA(Thr) + AMP + diphosphate + H(+). Its function is as follows. Catalyzes the attachment of threonine to tRNA(Thr) in a two-step reaction: L-threonine is first activated by ATP to form Thr-AMP and then transferred to the acceptor end of tRNA(Thr). Also edits incorrectly charged L-seryl-tRNA(Thr). This Yersinia enterocolitica serotype O:8 / biotype 1B (strain NCTC 13174 / 8081) protein is Threonine--tRNA ligase.